Reading from the N-terminus, the 137-residue chain is Large ribosomal subunit protein bL17 (137 aa).

The protein belongs to the bacterial ribosomal protein bL17 family. As to quaternary structure, part of the 50S ribosomal subunit. Contacts protein L32.

The chain is Large ribosomal subunit protein bL17 from Caulobacter vibrioides (strain ATCC 19089 / CIP 103742 / CB 15) (Caulobacter crescentus).